Here is a 346-residue protein sequence, read N- to C-terminus: Eukaryotic translation initiation factor 3 subunit I (346 aa).

WD repeat units follow at residues 8-49 (GHER…GTYH), 50-91 (GHQG…KTWD), 145-184 (CEDS…LLYN), 189-228 (ELNQ…VLKT), and 286-325 (GHFG…FDFM).

The protein belongs to the eIF-3 subunit I family. Component of the eukaryotic translation initiation factor 3 (eIF-3) complex.

The protein resides in the cytoplasm. Functionally, component of the eukaryotic translation initiation factor 3 (eIF-3) complex, which is involved in protein synthesis of a specialized repertoire of mRNAs and, together with other initiation factors, stimulates binding of mRNA and methionyl-tRNAi to the 40S ribosome. The eIF-3 complex specifically targets and initiates translation of a subset of mRNAs involved in cell proliferation. The protein is Eukaryotic translation initiation factor 3 subunit I (tif-34) of Neurospora crassa (strain ATCC 24698 / 74-OR23-1A / CBS 708.71 / DSM 1257 / FGSC 987).